Consider the following 349-residue polypeptide: Phosphoribosylformylglycinamidine cyclo-ligase (349 aa).

This sequence belongs to the AIR synthase family.

It is found in the cytoplasm. It carries out the reaction 2-formamido-N(1)-(5-O-phospho-beta-D-ribosyl)acetamidine + ATP = 5-amino-1-(5-phospho-beta-D-ribosyl)imidazole + ADP + phosphate + H(+). It participates in purine metabolism; IMP biosynthesis via de novo pathway; 5-amino-1-(5-phospho-D-ribosyl)imidazole from N(2)-formyl-N(1)-(5-phospho-D-ribosyl)glycinamide: step 2/2. The polypeptide is Phosphoribosylformylglycinamidine cyclo-ligase (Methanococcus maripaludis (strain DSM 14266 / JCM 13030 / NBRC 101832 / S2 / LL)).